The sequence spans 197 residues: Ribosomal RNA large subunit methyltransferase E (197 aa).

Positions 52, 54, 72, 88, and 112 each coordinate S-adenosyl-L-methionine. The Proton acceptor role is filled by Lys152.

Belongs to the class I-like SAM-binding methyltransferase superfamily. RNA methyltransferase RlmE family.

It localises to the cytoplasm. It carries out the reaction uridine(2552) in 23S rRNA + S-adenosyl-L-methionine = 2'-O-methyluridine(2552) in 23S rRNA + S-adenosyl-L-homocysteine + H(+). Specifically methylates the uridine in position 2552 of 23S rRNA at the 2'-O position of the ribose in the fully assembled 50S ribosomal subunit. The sequence is that of Ribosomal RNA large subunit methyltransferase E from Nitrosopumilus maritimus (strain SCM1).